The chain runs to 544 residues: Glucose starvation modulator protein 1 (544 aa).

A DNA-binding region (zn(2)-C6 fungal-type) is located at residues Cys20 to Cys48. Residues Lys65–His93 are disordered. The segment covering Arg70–Ser86 has biased composition (low complexity). One can recognise a PAS domain in the interval Ser403–Gly475.

It belongs to the ERT1/acuK family.

It localises to the nucleus. Transcription factor which regulates nonfermentable carbon utilization. The polypeptide is Glucose starvation modulator protein 1 (GSM1) (Debaryomyces hansenii (strain ATCC 36239 / CBS 767 / BCRC 21394 / JCM 1990 / NBRC 0083 / IGC 2968) (Yeast)).